A 120-amino-acid polypeptide reads, in one-letter code: Transcription elongation factor SPT4 (120 aa).

The segment at 1-39 is interaction with spt-5; it reads MAASIPSDLRNLRACLLCSLIKSVDAFQTDGCENCDEVL. The C4-type zinc-finger motif lies at 15–35; it reads CLLCSLIKSVDAFQTDGCENC.

The protein belongs to the SPT4 family. As to quaternary structure, interacts with spt-5 to form DSIF. DSIF interacts with RNA polymerase II and with the positive transcription elongation factor b complex (P-TEFb complex), which is composed of cdk-9 and cyclin-T.

The protein resides in the nucleus. Its function is as follows. May function as a component of the DRB sensitivity-inducing factor complex (DSIF complex), which regulates transcription elongation by RNA polymerase II. DSIF may enhance transcriptional pausing at sites proximal to the promoter, which may in turn facilitate the assembly of an elongation competent RNA polymerase II complex. The protein is Transcription elongation factor SPT4 (spt-4) of Caenorhabditis briggsae.